The following is a 260-amino-acid chain: 3'-5' ssDNA/RNA exonuclease TatD (260 aa).

A divalent metal cation is bound by residues glutamate 92, histidine 128, and histidine 153.

The protein belongs to the metallo-dependent hydrolases superfamily. TatD-type hydrolase family. TatD subfamily. In terms of assembly, monomer. Requires Mg(2+) as cofactor.

It localises to the cytoplasm. In terms of biological role, 3'-5' exonuclease that prefers single-stranded DNA and RNA. May play a role in the H(2)O(2)-induced DNA damage repair. The sequence is that of 3'-5' ssDNA/RNA exonuclease TatD from Pantoea vagans (strain C9-1) (Pantoea agglomerans (strain C9-1)).